Here is a 482-residue protein sequence, read N- to C-terminus: 23S rRNA (uracil(1939)-C(5))-methyltransferase RlmD (482 aa).

The disordered stretch occupies residues 1–33; the sequence is MANLFKQSRAKQKNKTTPSQTQTSTKGSARANA. Low complexity predominate over residues 15-28; that stretch reads KTTPSQTQTSTKGS. In terms of domain architecture, TRAM spans 51–108; that stretch reads TAQDANNNAITIQELDWMGQGVARGATMYFVEGALPGETCDIEVVSSKKKVVSAKTIS. Residues C121, C127, C130, and C208 each coordinate [4Fe-4S] cluster. Q313, F342, N347, E363, D390, and D411 together coordinate S-adenosyl-L-methionine. Catalysis depends on C437, which acts as the Nucleophile.

It belongs to the class I-like SAM-binding methyltransferase superfamily. RNA M5U methyltransferase family. RlmD subfamily.

The catalysed reaction is uridine(1939) in 23S rRNA + S-adenosyl-L-methionine = 5-methyluridine(1939) in 23S rRNA + S-adenosyl-L-homocysteine + H(+). Its function is as follows. Catalyzes the formation of 5-methyl-uridine at position 1939 (m5U1939) in 23S rRNA. The polypeptide is 23S rRNA (uracil(1939)-C(5))-methyltransferase RlmD (Alteromonas mediterranea (strain DSM 17117 / CIP 110805 / LMG 28347 / Deep ecotype)).